Here is a 1119-residue protein sequence, read N- to C-terminus: Isoleucine--tRNA ligase (1119 aa).

The tract at residues 1 to 43 (MVPRRSRQRPASSCRTAKTARREMPYPLPAPDGQEPEAQPVTP) is disordered. A 'HIGH' region motif is present at residues 84–94 (PFANGLPHYGH). A 'KMSKS' region motif is present at residues 676–680 (KVSKS). Lys-679 contacts ATP.

It belongs to the class-I aminoacyl-tRNA synthetase family. IleS type 2 subfamily. Monomer. Zn(2+) is required as a cofactor.

It is found in the cytoplasm. It carries out the reaction tRNA(Ile) + L-isoleucine + ATP = L-isoleucyl-tRNA(Ile) + AMP + diphosphate. Functionally, catalyzes the attachment of isoleucine to tRNA(Ile). As IleRS can inadvertently accommodate and process structurally similar amino acids such as valine, to avoid such errors it has two additional distinct tRNA(Ile)-dependent editing activities. One activity is designated as 'pretransfer' editing and involves the hydrolysis of activated Val-AMP. The other activity is designated 'posttransfer' editing and involves deacylation of mischarged Val-tRNA(Ile). The polypeptide is Isoleucine--tRNA ligase (Leifsonia xyli subsp. xyli (strain CTCB07)).